We begin with the raw amino-acid sequence, 285 residues long: RNA 5'-monophosphate methyltransferase (285 aa).

S-adenosyl-L-methionine-binding positions include Arg46, Asn77, Asp111, 136–137, and Met165; that span reads DI. Residues 53 to 275 form the Bin3-type SAM domain; that stretch reads ELLRQLFPPE…KHTHETQAIP (223 aa).

This sequence belongs to the methyltransferase superfamily. Interacts with DICER1; the interaction may be mediated by RNA.

The protein localises to the cytoplasm. It carries out the reaction a 5'-end 5'-phospho-ribonucleoside-RNA + S-adenosyl-L-methionine = a 5'-end (5'-methylphospho)-ribonucleoside-RNA + S-adenosyl-L-homocysteine. The catalysed reaction is a 5'-end 5'-phospho-ribonucleoside-RNA + 2 S-adenosyl-L-methionine = a 5'-end (5'-bismethylphospho)-ribonucleoside-RNA + 2 S-adenosyl-L-homocysteine. Its function is as follows. O-methyltransferase that specifically monomethylates 5'-monophosphate of cytoplasmic histidyl tRNA (tRNA(His)), acting as a capping enzyme by protecting tRNA(His) from cleavage by DICER1. Also able, with less efficiently, to methylate the 5' monophosphate of a subset of pre-miRNAs, acting as a negative regulator of miRNA processing. The 5' monophosphate of pre-miRNAs is recognized by DICER1 and is required for pre-miRNAs processing: methylation at this position reduces the processing of pre-miRNAs by DICER1. Was also reported to mediate dimethylation of pre-miR-145; however dimethylation cannot be reproduced by another group which observes a monomethylation of pre-miR-145. This chain is RNA 5'-monophosphate methyltransferase, found in Mus musculus (Mouse).